A 420-amino-acid polypeptide reads, in one-letter code: Serine palmitoyltransferase (420 aa).

Pyridoxal 5'-phosphate is bound by residues 134–135 (GY), H234, T262, and S264. The residue at position 265 (K265) is an N6-(pyridoxal phosphate)lysine.

It belongs to the class-II pyridoxal-phosphate-dependent aminotransferase family. Homodimer. Requires pyridoxal 5'-phosphate as cofactor.

The protein localises to the cytoplasm. The catalysed reaction is L-serine + hexadecanoyl-CoA + H(+) = 3-oxosphinganine + CO2 + CoA. It participates in lipid metabolism; sphingolipid metabolism. With respect to regulation, not inhibited by relatively high concentrations of palmitoyl-CoA. Inhibited by both D-cycloserine (DCS) and L-cycloserine (LCS), which inactivate SPT by transamination to form a free pyridoxamine 5'-phosphate (PMP) and beta-aminooxyacetaldehyde that remain bound at the active site. Inhibition is reversed by incubation with excess pyridoxal phosphate. Inhibited by the fungal natural product myriocin, which acts as a competitive inhibitor for both L-serine and palmitoyl-CoA substrates. Functionally, catalyzes the condensation of L-serine with palmitoyl-CoA (hexadecanoyl-CoA) to produce 3-oxosphinganine. Exhibits a broad substrate specificity concerning the chain length and the degree of unsaturation of acyl-CoA. This chain is Serine palmitoyltransferase, found in Sphingomonas paucimobilis (Pseudomonas paucimobilis).